We begin with the raw amino-acid sequence, 243 residues long: Uba3-binding protein but1 (243 aa).

The disordered stretch occupies residues 28-50; that stretch reads KSTKKRRSSTKDEETRGMHPHIK.

As to quaternary structure, homodimer. Interacts with but2 and uba3.

It is found in the nucleus. Its function is as follows. Acts as a negative regulator of the NEDD8 pathway. Has a role in meiosis. The sequence is that of Uba3-binding protein but1 (but1) from Schizosaccharomyces pombe (strain 972 / ATCC 24843) (Fission yeast).